A 260-amino-acid chain; its full sequence is Tryptophan 2,3-dioxygenase (260 aa).

Substrate-binding positions include phenylalanine 34–histidine 38 and arginine 100. Residue histidine 219 participates in heme binding. Threonine 233 provides a ligand contact to substrate.

This sequence belongs to the tryptophan 2,3-dioxygenase family. Homotetramer. Requires heme as cofactor.

It catalyses the reaction L-tryptophan + O2 = N-formyl-L-kynurenine. Its pathway is amino-acid degradation; L-tryptophan degradation via kynurenine pathway; L-kynurenine from L-tryptophan: step 1/2. Functionally, heme-dependent dioxygenase that catalyzes the oxidative cleavage of the L-tryptophan (L-Trp) pyrrole ring and converts L-tryptophan to N-formyl-L-kynurenine. Catalyzes the oxidative cleavage of the indole moiety. In Herpetosiphon aurantiacus (strain ATCC 23779 / DSM 785 / 114-95), this protein is Tryptophan 2,3-dioxygenase.